Consider the following 658-residue polypeptide: Threonine--tRNA ligase (658 aa).

The TGS domain occupies 1–64 (MSCSISLSFP…GQSGQVEIIT (64 aa)). Residues 246–549 (DHRRLGREMD…LIENFAGHMP (304 aa)) form a catalytic region. Zn(2+) is bound by residues Cys-343, His-394, and His-526.

Belongs to the class-II aminoacyl-tRNA synthetase family. Homodimer. Zn(2+) is required as a cofactor.

The protein localises to the cytoplasm. It carries out the reaction tRNA(Thr) + L-threonine + ATP = L-threonyl-tRNA(Thr) + AMP + diphosphate + H(+). Its function is as follows. Catalyzes the attachment of threonine to tRNA(Thr) in a two-step reaction: L-threonine is first activated by ATP to form Thr-AMP and then transferred to the acceptor end of tRNA(Thr). Also edits incorrectly charged L-seryl-tRNA(Thr). The sequence is that of Threonine--tRNA ligase from Bartonella tribocorum (strain CIP 105476 / IBS 506).